Here is a 31-residue protein sequence, read N- to C-terminus: MLTITSYFGFLLAALTITSALFIGLNKIGLI.

A helical transmembrane segment spans residues 4-24 (ITSYFGFLLAALTITSALFIG).

Belongs to the PetL family. The 4 large subunits of the cytochrome b6-f complex are cytochrome b6, subunit IV (17 kDa polypeptide, PetD), cytochrome f and the Rieske protein, while the 4 small subunits are PetG, PetL, PetM and PetN. The complex functions as a dimer.

Its subcellular location is the plastid. It localises to the chloroplast thylakoid membrane. In terms of biological role, component of the cytochrome b6-f complex, which mediates electron transfer between photosystem II (PSII) and photosystem I (PSI), cyclic electron flow around PSI, and state transitions. PetL is important for photoautotrophic growth as well as for electron transfer efficiency and stability of the cytochrome b6-f complex. The polypeptide is Cytochrome b6-f complex subunit 6 (Humulus lupulus (European hop)).